The sequence spans 308 residues: Glutaminase (308 aa).

The substrate site is built by Ser66, Asn117, Glu161, Asn168, Tyr192, Tyr244, and Val262.

Belongs to the glutaminase family. In terms of assembly, homotetramer.

It carries out the reaction L-glutamine + H2O = L-glutamate + NH4(+). This chain is Glutaminase, found in Yersinia pestis bv. Antiqua (strain Nepal516).